A 426-amino-acid polypeptide reads, in one-letter code: Glutamate-1-semialdehyde 2,1-aminomutase (426 aa).

The residue at position 265 (lysine 265) is an N6-(pyridoxal phosphate)lysine.

The protein belongs to the class-III pyridoxal-phosphate-dependent aminotransferase family. HemL subfamily. In terms of assembly, homodimer. Pyridoxal 5'-phosphate serves as cofactor.

The protein localises to the cytoplasm. It carries out the reaction (S)-4-amino-5-oxopentanoate = 5-aminolevulinate. It participates in porphyrin-containing compound metabolism; protoporphyrin-IX biosynthesis; 5-aminolevulinate from L-glutamyl-tRNA(Glu): step 2/2. In Escherichia coli O127:H6 (strain E2348/69 / EPEC), this protein is Glutamate-1-semialdehyde 2,1-aminomutase.